The primary structure comprises 220 residues: Tumor protein D54 (220 aa).

The residue at position 1 (Met-1) is an N-acetylmethionine. The segment covering Met-1 to Asn-14 has biased composition (polar residues). Residues Met-1 to Pro-26 are disordered. 3 positions are modified to phosphoserine: Ser-3, Ser-12, and Ser-19. The stretch at Gly-40 to Gly-82 forms a coiled coil. Phosphoserine is present on residues Ser-96, Ser-149, Ser-168, and Ser-175. Thr-177 carries the post-translational modification Phosphothreonine. Ser-180 carries the phosphoserine modification. Thr-187 carries the phosphothreonine modification. The segment at Lys-189–Phe-220 is disordered. A compositionally biased stretch (polar residues) spans Ser-200 to Gln-212. Ser-206 and Ser-209 each carry phosphoserine.

Belongs to the TPD52 family. As to quaternary structure, forms a homodimer or heterodimer with other members of the family. Interacts with MAL2.

This is Tumor protein D54 (Tpd52l2) from Rattus norvegicus (Rat).